Reading from the N-terminus, the 78-residue chain is Large ribosomal subunit protein uL29 (78 aa).

Residues V59–E78 form a disordered region. The segment covering S68–E78 has biased composition (polar residues).

Belongs to the universal ribosomal protein uL29 family.

This Synechococcus sp. (strain JA-3-3Ab) (Cyanobacteria bacterium Yellowstone A-Prime) protein is Large ribosomal subunit protein uL29.